The chain runs to 437 residues: Eukaryotic peptide chain release factor subunit 1 (437 aa).

A2 is subject to N-acetylalanine. The short motif at 61–64 (NIKS) is the NIKS motif; plays an important role in translational termination element. Residue K63 is modified to 4-hydroxylysine. K87 is covalently cross-linked (Glycyl lysine isopeptide (Lys-Gly) (interchain with G-Cter in SUMO2)). Q185 is modified (N5-methylglutamine). K279 is covalently cross-linked (Glycyl lysine isopeptide (Lys-Gly) (interchain with G-Cter in ubiquitin)). T347 carries the post-translational modification Phosphothreonine. K404 participates in a covalent cross-link: Glycyl lysine isopeptide (Lys-Gly) (interchain with G-Cter in SUMO2).

This sequence belongs to the eukaryotic release factor 1 family. In terms of assembly, component of the eRF1-eRF3-GTP ternary complex, composed of ETF1/ERF1 and eRF3 (GSPT1/ERF3A or GSPT2/ERF3B) and GTP. Component of the transient SURF (SMG1-UPF1-eRF1-eRF3) complex. Interacts with JMJD4. The ETF1-GSPT1 complex interacts with JMJD4. Hydroxylation at Lys-63 by JMJD4 promotes its translational termination efficiency. In terms of processing, methylated at Gln-185 by N6AMT1. Post-translationally, ubiquitinated at Lys-279 via 'Lys-6'-linked polyubiquitin chains by RNF14 and RNF25 in response to ribosome collisions (ribosome stalling), leading to its degradation by the proteasome and rescue of stalled ribosomes.

The protein resides in the cytoplasm. Its function is as follows. Component of the eRF1-eRF3-GTP ternary complex, a ternary complex that mediates translation termination in response to the termination codons. The eRF1-eRF3-GTP complex binds to a stop codon in the ribosomal A-site. ETF1/ERF1 is responsible for stop codon recognition and inducing hydrolysis of peptidyl-tRNA. Following GTP hydrolysis, eRF3 (GSPT1/ERF3A or GSPT2/ERF3B) dissociates, permitting ETF1/eRF1 to accommodate fully in the A-site, followed by hydrolysis of peptidyl-tRNA. Component of the transient SURF complex which recruits UPF1 to stalled ribosomes in the context of nonsense-mediated decay (NMD) of mRNAs containing premature stop codons. Required for SHFL-mediated translation termination which inhibits programmed ribosomal frameshifting (-1PRF) of mRNA from viruses and cellular genes. This is Eukaryotic peptide chain release factor subunit 1 (ETF1) from Bos taurus (Bovine).